We begin with the raw amino-acid sequence, 230 residues long: AA9 family lytic polysaccharide monooxygenase H (230 aa).

The signal sequence occupies residues 1–17 (MKTLSAGLLALASAASA). Residues His-18 and His-89 each contribute to the Cu(2+) site. A disulfide bridge links Cys-59 with Cys-178. O2-binding residues include His-164 and Gln-173. Tyr-175 contributes to the Cu(2+) binding site.

This sequence belongs to the polysaccharide monooxygenase AA9 family. Requires Cu(2+) as cofactor.

The protein resides in the secreted. It carries out the reaction [(1-&gt;4)-beta-D-glucosyl]n+m + reduced acceptor + O2 = 4-dehydro-beta-D-glucosyl-[(1-&gt;4)-beta-D-glucosyl]n-1 + [(1-&gt;4)-beta-D-glucosyl]m + acceptor + H2O.. Lytic polysaccharide monooxygenase (LPMO) that depolymerizes crystalline and amorphous polysaccharides via the oxidation of scissile alpha- or beta-(1-4)-glycosidic bonds, yielding primarly C1 oxidation products. Catalysis by LPMOs requires the reduction of the active-site copper from Cu(II) to Cu(I) by a reducing agent and H(2)O(2) or O(2) as a cosubstrate. Active on hemicelluloses, including xylan, glucomannan, and xyloglucan. Preferentially cleaves residual xylan in phosphoric acid-swollen cellulose (PASC). Moreover, when exposed to cellulose-xylan blends, shows a preference for xylan and for releasing oxidized xylooligosaccharides. Has no activity on ivory nut mannan (INM), a linear beta-1,4-linked mannan without substitutions. The chain is AA9 family lytic polysaccharide monooxygenase H from Malbranchea cinnamomea (Thermophilic fungus).